Consider the following 412-residue polypeptide: MAAALLARAGGSLGRALRARDWRRLHTVYQSVELPETHQMLRQTCRDFAEKELVPIAAQLDKEHLFPTSQVKKMGELGLLAMDVPEELSGAGLDYLAYSIALEEISRGCASTGVIMSVNNSLYLGPILKFGSSQQKQQWITPFTNGDKIGCFALSEPGNGSDAGAASTTAREEGDSWVLNGTKAWITNSWEASATVVFASTDRSRQNKGISAFLVPMPTPGLTLGKKEDKLGIRASSTANLIFEDCRIPKENLLGEPGMGFKIAMQTLDMGRIGIASQALGIAQASLDCAVKYAENRHAFGAPLTKLQNIQFKLADMALALESARLLTWRAAMLKDNKKPFTKESAMAKLAASEAATAISHQAIQILGGMGYVTEMPAERYYRDARITEIYEGTSEIQRLVIAGHLLRSYRS.

The transit peptide at 1-24 (MAAALLARAGGSLGRALRARDWRR) directs the protein to the mitochondrion. Threonine 27 bears the Phosphothreonine mark. Lysine 51 carries the N6-acetyllysine; alternate modification. An N6-succinyllysine; alternate modification is found at lysine 51. Residue lysine 72 is modified to N6-acetyllysine. Residue lysine 129 is modified to N6-acetyllysine; alternate. Position 129 is an N6-succinyllysine; alternate (lysine 129). Residues 152–161 (FALSEPGNGS) and 185–187 (WIT) each bind FAD. Residue serine 161 coordinates substrate. Lysine 208 carries the N6-acetyllysine modification. Lysine 262 is modified (N6-acetyllysine; alternate). The residue at position 262 (lysine 262) is an N6-succinyllysine; alternate. Residue 269 to 272 (DMGR) coordinates substrate. The residue at position 292 (lysine 292) is an N6-acetyllysine. Arginine 297 contributes to the FAD binding site. Lysine 306 is modified (N6-acetyllysine; alternate). Lysine 306 is subject to N6-succinyllysine; alternate. 365 to 369 (QILGG) is a binding site for FAD. The Proton acceptor role is filled by glutamate 392. 394–396 (TSE) contacts FAD.

This sequence belongs to the acyl-CoA dehydrogenase family. As to quaternary structure, homotetramer. It depends on FAD as a cofactor.

Its subcellular location is the mitochondrion matrix. The catalysed reaction is a short-chain 2,3-saturated fatty acyl-CoA + oxidized [electron-transfer flavoprotein] + H(+) = a short-chain (2E)-enoyl-CoA + reduced [electron-transfer flavoprotein]. It carries out the reaction butanoyl-CoA + oxidized [electron-transfer flavoprotein] + H(+) = (2E)-butenoyl-CoA + reduced [electron-transfer flavoprotein]. The enzyme catalyses pentanoyl-CoA + oxidized [electron-transfer flavoprotein] + H(+) = (2E)-pentenoyl-CoA + reduced [electron-transfer flavoprotein]. It catalyses the reaction hexanoyl-CoA + oxidized [electron-transfer flavoprotein] + H(+) = (2E)-hexenoyl-CoA + reduced [electron-transfer flavoprotein]. Its pathway is lipid metabolism; mitochondrial fatty acid beta-oxidation. Functionally, short-chain specific acyl-CoA dehydrogenase is one of the acyl-CoA dehydrogenases that catalyze the first step of mitochondrial fatty acid beta-oxidation, an aerobic process breaking down fatty acids into acetyl-CoA and allowing the production of energy from fats. The first step of fatty acid beta-oxidation consists in the removal of one hydrogen from C-2 and C-3 of the straight-chain fatty acyl-CoA thioester, resulting in the formation of trans-2-enoyl-CoA. Among the different mitochondrial acyl-CoA dehydrogenases, short-chain specific acyl-CoA dehydrogenase acts specifically on acyl-CoAs with saturated 4 to 6 carbons long primary chains. This is Short-chain specific acyl-CoA dehydrogenase, mitochondrial (Acads) from Rattus norvegicus (Rat).